The primary structure comprises 283 residues: Small ribosomal subunit protein uS3 (283 aa).

The KH type-2 domain occupies 39–107; sequence VRAYLKTKLK…PVHVNIEEIR (69 aa). A disordered region spans residues 209–283; the sequence is PSGEPPVDLT…GAVPAEKAGE (75 aa). Basic and acidic residues predominate over residues 217–235; sequence LTKEDDTKRRGPRRDDGKP. A compositionally biased stretch (low complexity) spans 244–260; that stretch reads PEGQPGAAAAPGAAPAA.

Belongs to the universal ribosomal protein uS3 family. As to quaternary structure, part of the 30S ribosomal subunit. Forms a tight complex with proteins S10 and S14.

In terms of biological role, binds the lower part of the 30S subunit head. Binds mRNA in the 70S ribosome, positioning it for translation. The chain is Small ribosomal subunit protein uS3 from Herminiimonas arsenicoxydans.